The sequence spans 150 residues: UPF0506 protein SJCHGC02380 (150 aa).

The first 18 residues, 1 to 18, serve as a signal peptide directing secretion; the sequence is MNTCIQLLILCLVTVINS. N-linked (GlcNAc...) asparagine glycans are attached at residues asparagine 20, asparagine 24, asparagine 36, asparagine 48, asparagine 52, and asparagine 110. 3 disulfide bridges follow: cysteine 116–cysteine 130, cysteine 123–cysteine 134, and cysteine 129–cysteine 139.

This sequence belongs to the UPF0506 family.

The protein resides in the secreted. The protein is UPF0506 protein SJCHGC02380 of Schistosoma japonicum (Blood fluke).